Consider the following 1131-residue polypeptide: Plasma membrane ATPase (1131 aa).

A run of 6 helical transmembrane segments spans residues 77-97, 98-118, 151-171, 231-251, 265-285, and 305-325; these read PVLVFLGYMWNPLAWAMEAAA, IISIALLDVADFVLIVGLLLI, GAIVTIDAVNLVPGDVILIRL, AVVYATGVNTFFGRAAALISG, MSAICIVTILLWVVVELAVQF, and MLVVLVGGIPIAMPTVLSVTL. The active-site 4-aspartylphosphate intermediate is D357. Residues D615 and D619 each coordinate Mg(2+). The next 5 helical transmembrane spans lie at 642-662, 689-709, 733-753, 884-904, and 946-966; these read AADIVLTEPGLSTIVTAVIGA, LITVIYDWYFPTILIVIMAVF, ITNIFIMGMVYGLYLTLSTWA, LAFFFAQVGATLFGIFGLGGF, and VIGCGGYVIVAWIWSAIWYVL. The segment covering 994-1010 has biased composition (basic and acidic residues); the sequence is KRSLDRRSKDDIGDKEF. 2 disordered regions span residues 994–1023 and 1067–1131; these read KRSLDRRSKDDIGDKEFTGPSGMVPANYSN and RRSM…TIRE. Over residues 1089 to 1100 the composition is skewed to polar residues; the sequence is SRTSNTLSTGSK. The segment covering 1118–1131 has biased composition (basic and acidic residues); the sequence is IKPDKYDFASTIRE.

This sequence belongs to the cation transport ATPase (P-type) (TC 3.A.3) family. Type IIIA subfamily.

Its subcellular location is the cell membrane. The enzyme catalyses ATP + H2O + H(+)(in) = ADP + phosphate + 2 H(+)(out). Functionally, the plasma membrane ATPase of plants and fungi is a hydrogen ion pump. The proton gradient it generates drives the active transport of nutrients by H(+)-symport. The resulting external acidification and/or internal alkinization may mediate growth responses. The sequence is that of Plasma membrane ATPase (PMA1) from Dunaliella bioculata (Green alga).